The sequence spans 223 residues: MOB kinase activator-like 4 (223 aa).

Positions Met1–Asp21 are disordered. The Zn(2+) site is built by Cys92, Cys97, His169, and His174.

Belongs to the MOB1/phocein family.

The sequence is that of MOB kinase activator-like 4 (Mob4) from Drosophila melanogaster (Fruit fly).